Here is a 208-residue protein sequence, read N- to C-terminus: CKLF-like MARVEL transmembrane domain-containing protein 4 (208 aa).

The span at Met-1 to Glu-11 shows a compositional bias: acidic residues. The segment at Met-1–Arg-38 is disordered. Positions Ser-15–Ser-25 are enriched in low complexity. The region spanning Tyr-49 to Arg-176 is the MARVEL domain. Transmembrane regions (helical) follow at residues Val-59 to Ser-79, Tyr-85 to Phe-105, Leu-123 to Leu-143, and Ile-151 to Ala-171. A Phosphoserine modification is found at Ser-194.

This sequence belongs to the chemokine-like factor family. As to quaternary structure, interacts with PD1L1 and CMTM6.

It is found in the membrane. Its function is as follows. Acts as a backup for CMTM6 to regulate plasma membrane expression of PD-L1/CD274, an immune inhibitory ligand critical for immune tolerance to self and antitumor immunity. May protect PD-L1/CD274 from being polyubiquitinated and targeted for degradation. This Mus musculus (Mouse) protein is CKLF-like MARVEL transmembrane domain-containing protein 4.